The sequence spans 260 residues: Ribonuclease 3 (260 aa).

The RNase III domain maps to 16 to 145 (VQLLESRLGL…VFGAVFLTSG (130 aa)). Glutamate 58 provides a ligand contact to Mg(2+). Residue aspartate 62 is part of the active site. Aspartate 131 and glutamate 134 together coordinate Mg(2+). Glutamate 134 is a catalytic residue. The DRBM domain maps to 172–241 (DYKTLLQEMA…AQATLEKLRE (70 aa)). Positions 219–260 (ATGRSKKEAEQSAAQATLEKLREDAACPTSPPPGTPRHDTPA) are disordered.

This sequence belongs to the ribonuclease III family. As to quaternary structure, homodimer. Mg(2+) is required as a cofactor.

It localises to the cytoplasm. It carries out the reaction Endonucleolytic cleavage to 5'-phosphomonoester.. Its function is as follows. Digests double-stranded RNA. Involved in the processing of primary rRNA transcript to yield the immediate precursors to the large and small rRNAs (23S and 16S). Processes some mRNAs, and tRNAs when they are encoded in the rRNA operon. Processes pre-crRNA and tracrRNA of type II CRISPR loci if present in the organism. The protein is Ribonuclease 3 of Myxococcus xanthus (strain DK1622).